Consider the following 115-residue polypeptide: Large ribosomal subunit protein bL19 (115 aa).

Belongs to the bacterial ribosomal protein bL19 family.

Its function is as follows. This protein is located at the 30S-50S ribosomal subunit interface and may play a role in the structure and function of the aminoacyl-tRNA binding site. This chain is Large ribosomal subunit protein bL19, found in Buchnera aphidicola subsp. Acyrthosiphon pisum (strain 5A).